Reading from the N-terminus, the 342-residue chain is tRNA (guanine(26)-N(2))-dimethyltransferase (342 aa).

Residues 1–336 (MRITEGSAVI…CPYAEVSEIL (336 aa)) enclose the Trm1 methyltransferase domain. S-adenosyl-L-methionine contacts are provided by Arg-35, Arg-60, and Glu-76.

It belongs to the class I-like SAM-binding methyltransferase superfamily. Trm1 family.

The enzyme catalyses guanosine(26) in tRNA + 2 S-adenosyl-L-methionine = N(2)-dimethylguanosine(26) in tRNA + 2 S-adenosyl-L-homocysteine + 2 H(+). Dimethylates a single guanine residue at position 26 of a number of tRNAs using S-adenosyl-L-methionine as donor of the methyl groups. The sequence is that of tRNA (guanine(26)-N(2))-dimethyltransferase from Thermoplasma volcanium (strain ATCC 51530 / DSM 4299 / JCM 9571 / NBRC 15438 / GSS1).